The sequence spans 188 residues: MSTRAPVELDFLGLRAAAADADDRHAKSGGSSASSSSSIRGMETSAIARIGPHLLRRVIAAAGPPPPPSTAPVPEEMPGAAAAAAPMTLFYNGSVAVFDVSHDKAEAIMRMATEATKAKGLARGNAIVGNFAKEPLTRTKSLQRFLSKRKERLTSLGPYQVGGPAAVGATTSTTTKSFLAKEEEHTAS.

The tract at residues 20–41 (DADDRHAKSGGSSASSSSSIRG) is disordered. The segment covering 28 to 38 (SGGSSASSSSS) has biased composition (low complexity). The region spanning 80–114 (AAAAAAPMTLFYNGSVAVFDVSHDKAEAIMRMATE) is the Tify domain. A Jas motif is present at residues 135–160 (PLTRTKSLQRFLSKRKERLTSLGPYQ). Residues 156–188 (LGPYQVGGPAAVGATTSTTTKSFLAKEEEHTAS) form a disordered region. Basic and acidic residues predominate over residues 179 to 188 (LAKEEEHTAS).

It belongs to the TIFY/JAZ family. In terms of assembly, interacts with COI1A and COI2 in a coronatine-dependent manner. Coronatine is an analog of jasmonoyl isoleucine (JA-Ile). Ubiquitinated. Targeted for degradation by the SCF(COI1) E3 ubiquitin ligase-proteasome pathway during jasmonate signaling.

Its function is as follows. Repressor of jasmonate responses. This chain is Protein TIFY 9, found in Oryza sativa subsp. japonica (Rice).